The chain runs to 258 residues: Hydroxyacylglutathione hydrolase cytoplasmic (258 aa).

Residues H54 and H56 each contribute to the Zn(2+) site. D58 and H59 together coordinate Fe cation. H112 and D135 together coordinate Zn(2+). D135 provides a ligand contact to Fe cation. Residues 144–146 (KFF) and 174–176 (HEY) contribute to the substrate site. Residue H174 coordinates Fe cation.

It belongs to the metallo-beta-lactamase superfamily. Glyoxalase II family. As to quaternary structure, homodimer. Fe(2+) serves as cofactor. It depends on Zn(2+) as a cofactor. Fe(3+) is required as a cofactor. Mainly expressed in flowers and flower buds. Also detected in roots and leaves.

The protein localises to the cytoplasm. The enzyme catalyses an S-(2-hydroxyacyl)glutathione + H2O = a 2-hydroxy carboxylate + glutathione + H(+). It functions in the pathway secondary metabolite metabolism; methylglyoxal degradation; (R)-lactate from methylglyoxal: step 2/2. Thiolesterase that catalyzes the hydrolysis of S-D-lactoyl-glutathione to form glutathione and D-lactic acid. The chain is Hydroxyacylglutathione hydrolase cytoplasmic (GLX2-2) from Arabidopsis thaliana (Mouse-ear cress).